Reading from the N-terminus, the 376-residue chain is Probable sister chromatid cohesion protein DCC1 (376 aa).

Positions 213 to 232 (QKSPTNSGGGGEEIKGGGGD) are disordered. The segment covering 219-232 (SGGGGEEIKGGGGD) has biased composition (gly residues).

Belongs to the DCC1 family.

The protein localises to the nucleus. Functionally, loads PCNA onto primed templates regulating velocity, spacing and restart activity of replication forks. May couple DNA replication to sister chromatid cohesion. This is Probable sister chromatid cohesion protein DCC1 from Dictyostelium discoideum (Social amoeba).